Here is a 182-residue protein sequence, read N- to C-terminus: Small ribosomal subunit protein uS4c (182 aa).

The 62-residue stretch at 82-143 (MRLDNILFRL…KQRSKALIQN (62 aa)) folds into the S4 RNA-binding domain.

This sequence belongs to the universal ribosomal protein uS4 family. Part of the 30S ribosomal subunit. Contacts protein S5. The interaction surface between S4 and S5 is involved in control of translational fidelity.

The protein localises to the plastid. It localises to the chloroplast. Functionally, one of the primary rRNA binding proteins, it binds directly to 16S rRNA where it nucleates assembly of the body of the 30S subunit. With S5 and S12 plays an important role in translational accuracy. This is Small ribosomal subunit protein uS4c (rps4) from Libertia formosa (Snowy mermaid).